Here is a 523-residue protein sequence, read N- to C-terminus: Tyrosine ammonia-lyase (523 aa).

Tyr-60 (proton donor/acceptor) is an active-site residue. His-89 is a substrate binding site. Residues 149–151 (ASG) constitute a cross-link (5-imidazolinone (Ala-Gly)). The residue at position 150 (Ser-150) is a 2,3-didehydroalanine (Ser). Substrate is bound by residues Arg-303 and 432–436 (NAANQ).

Belongs to the PAL/histidase family. As to quaternary structure, homotetramer. Post-translationally, contains an active site 4-methylidene-imidazol-5-one (MIO), which is formed autocatalytically by cyclization and dehydration of residues Ala-Ser-Gly.

It carries out the reaction L-tyrosine = (E)-4-coumarate + NH4(+). Its function is as follows. Catalyzes the non-oxidative deamination of L-tyrosine. Has very low phenylalanine ammonia-lyase activity (in vitro). The polypeptide is Tyrosine ammonia-lyase (hutH) (Cereibacter sphaeroides (strain ATCC 17023 / DSM 158 / JCM 6121 / CCUG 31486 / LMG 2827 / NBRC 12203 / NCIMB 8253 / ATH 2.4.1.) (Rhodobacter sphaeroides)).